Reading from the N-terminus, the 614-residue chain is MIKKATLLTAFSVTAFSAWAQDTSPDTLVVTANRFQQPRSAVLAPVTIVTRQDIERWQSTSVNDVLRRLPGVDIAQSGGAGQNSSIFIRGTNSSHVLVLIDGVRLNLAGVSGSADLSQFPVSLVQRIEYIRGPRSAIYGSDAIGGVVNIITTRDNPGTELTAGWGSNSYQNYDISTQQQLGENTRATLIGDYEYTKGFDVVAKGGTGMQAQPDRDGFLSKTLYGALEHTFSDRWSGFVRGYGYDNRTDYDAYYSPGSPLIDTRKLYSQSWDAGLHFNGERIQSQLVSSYSHSKDYNYDPHYGRYDTSATLDEMKQYNVQWTNSVVVGHGNVGAGVDWQKQTTTPGTGYVPEGYDQRNTGVYLTGLQQLGDFTLEAAARSDDNSQFGRHGTWQTSAGWEFIEGYRFIASYGTSYKAPNLGQLYGYYGNPNLNPEKSKQWEGAFEGLTAGVSWRISGYRNDINDMIDYDDHLQKYYNEGKARIKGIEATANFDTGPLTHTVSYDYVDARNAITDTPLPRRSKQMAKYQLDWDVYDFDWGMTYQYLGSRYDSDYSAYPYRTVKMGGVSLWDLTVAYPVTSHLTVRGKIANLFDKDYETVYGYQTAGREYTLSGSYTF.

An N-terminal signal peptide occupies residues 1–20 (MIKKATLLTAFSVTAFSAWA). A TonB box motif is present at residues 26–33 (DTLVVTAN). The region spanning 38–152 (PRSAVLAPVT…IGGVVNIITT (115 aa)) is the TBDR plug domain. Cyanocob(III)alamin-binding positions include S85, N92, and 110 to 111 (VS). The 460-residue stretch at 155–614 (NPGTELTAGW…EYTLSGSYTF (460 aa)) folds into the TBDR beta-barrel domain. 3 beta stranded membrane passes run 158 to 165 (TELTAGWG), 169 to 178 (YQNYDISTQQ), and 184 to 195 (TRATLIGDYEYT). Ca(2+)-binding residues include D199, Q211, D213, and D215. The next 2 membrane-spanning stretches (beta stranded) occupy residues 217 to 227 (FLSKTLYGALE) and 232 to 248 (DRWSGFVRGYGYDNRTD). Residues Y249 and D250 each coordinate Ca(2+). A251 is a binding site for cyanocob(III)alamin. D261 is a Ca(2+) binding site. Transmembrane regions (beta stranded) follow at residues 263–277 (RKLYSQSWDAGLHFN), 279–296 (ERIQSQLVSSYSHSKDYN), 309–325 (TLDEMKQYNVQWTNSVV), 328–337 (HGNVGAGVDW), 353–369 (YDQRNTGVYLTGLQQLG), 371–381 (FTLEAAARSDD), 385–400 (FGRHGTWQTSAGWEFI), 403–417 (YRFIASYGTSYKAPN), 434–443 (KSKQWEGAFE), 449–458 (VSWRISGYRN), 473–490 (YYNEGKARIKGIEATANF), 494–509 (PLTHTVSYDYVDARNA), 517–529 (RRSKQMAKYQLDW), and 535–550 (DWGMTYQYLGSRYDSD). T309 contacts cyanocob(III)alamin. R517 provides a ligand contact to cyanocob(III)alamin. A cyanocob(III)alamin-binding site is contributed by Y551. 3 beta stranded membrane passes run 558 to 572 (TVKMGGVSLWDLTVA), 585 to 596 (IANLFDKDYETV), and 602 to 614 (AGREYTLSGSYTF). The TonB C-terminal box signature appears at 597 to 614 (YGYQTAGREYTLSGSYTF).

The protein belongs to the TonB-dependent receptor family. BtuB (TC 1.B.14.3.1) subfamily.

The protein localises to the cell outer membrane. Functionally, involved in the active translocation of vitamin B12 (cyanocobalamin) across the outer membrane to the periplasmic space. It derives its energy for transport by interacting with the trans-periplasmic membrane protein TonB. This chain is Vitamin B12 transporter BtuB, found in Salmonella typhimurium (strain LT2 / SGSC1412 / ATCC 700720).